Reading from the N-terminus, the 376-residue chain is Alanine racemase (376 aa).

The active-site Proton acceptor; specific for D-alanine is the lysine 36. Lysine 36 bears the N6-(pyridoxal phosphate)lysine mark. Residue arginine 134 participates in substrate binding. Catalysis depends on tyrosine 266, which acts as the Proton acceptor; specific for L-alanine. Residue methionine 314 participates in substrate binding.

It belongs to the alanine racemase family. It depends on pyridoxal 5'-phosphate as a cofactor.

It catalyses the reaction L-alanine = D-alanine. The protein operates within amino-acid biosynthesis; D-alanine biosynthesis; D-alanine from L-alanine: step 1/1. Catalyzes the interconversion of L-alanine and D-alanine. May also act on other amino acids. This is Alanine racemase (alr) from Nitratidesulfovibrio vulgaris (strain ATCC 29579 / DSM 644 / CCUG 34227 / NCIMB 8303 / VKM B-1760 / Hildenborough) (Desulfovibrio vulgaris).